The chain runs to 631 residues: UvrABC system protein C (631 aa).

The disordered stretch occupies residues 1-20 (MKNETEAVADQPPKTGPVKP). Positions 34 to 112 (MSPGVYRMLD…IKQLKPKFNV (79 aa)) constitute a GIY-YIG domain. The UVR domain occupies 222 to 257 (TDLQRQLADGMAAASEAMEFERAAALRDRIRALTNV).

The protein belongs to the UvrC family. In terms of assembly, interacts with UvrB in an incision complex.

The protein localises to the cytoplasm. Functionally, the UvrABC repair system catalyzes the recognition and processing of DNA lesions. UvrC both incises the 5' and 3' sides of the lesion. The N-terminal half is responsible for the 3' incision and the C-terminal half is responsible for the 5' incision. The chain is UvrABC system protein C from Jannaschia sp. (strain CCS1).